We begin with the raw amino-acid sequence, 576 residues long: uncharacterized protein (576 aa).

Composition is skewed to polar residues over residues 1 to 21 and 28 to 40; these read MSTN…QSAS and HTTS…TYQL. Residues 1-40 are disordered; that stretch reads MSTNPNAGIQPLTNSISQSASAHPELYHTTSHESVSTYQL. The next 12 helical transmembrane spans lie at 149–169, 173–193, 200–220, 231–251, 261–281, 291–311, 366–386, 401–421, 446–466, 472–492, 503–525, and 542–562; these read FASS…HISL, LLTM…WAPL, KLPL…VAVA, FFSG…FADM, ITIF…IGGF, WTEY…YLFC, PIVF…YLLL, MGVA…GSAI, LPPM…LSWS, VHWI…LLIF, YLFR…AAGF, and GSLL…FFFF.

This sequence belongs to the major facilitator superfamily. CAR1 family.

The protein localises to the endoplasmic reticulum. The protein resides in the golgi apparatus. It localises to the membrane. This is an uncharacterized protein from Schizosaccharomyces pombe (strain 972 / ATCC 24843) (Fission yeast).